We begin with the raw amino-acid sequence, 70 residues long: DNA-directed RNA polymerase subunit omega (70 aa).

This sequence belongs to the RNA polymerase subunit omega family. In terms of assembly, the RNAP catalytic core consists of 2 alpha, 1 beta, 1 beta' and 1 omega subunit. When a sigma factor is associated with the core the holoenzyme is formed, which can initiate transcription.

It carries out the reaction RNA(n) + a ribonucleoside 5'-triphosphate = RNA(n+1) + diphosphate. Promotes RNA polymerase assembly. Latches the N- and C-terminal regions of the beta' subunit thereby facilitating its interaction with the beta and alpha subunits. In Bacillus cereus (strain G9842), this protein is DNA-directed RNA polymerase subunit omega.